The sequence spans 146 residues: Angiogenin (146 aa).

The N-terminal stretch at 1–24 (MVMGLGLFLLVFMLGLGLTPPTLA) is a signal peptide. Gln25 bears the Pyrrolidone carboxylic acid mark. The active-site Proton acceptor is His37. TRNA is bound at residue Arg45. Disulfide bonds link Cys50–Cys105, Cys63–Cys116, and Cys81–Cys131. The Nucleolar localization signal signature appears at 55–59 (RRRHL). TRNA-binding residues include Cys105 and Ile127. His138 (proton donor) is an active-site residue.

This sequence belongs to the pancreatic ribonuclease family. Homodimer. Interacts with RNH1; inhibiting ANG ribonuclease activity. Interacts with PCNA.

Its subcellular location is the secreted. It localises to the nucleus. The protein resides in the nucleolus. It is found in the cytoplasm. The protein localises to the stress granule. With respect to regulation, has weak tRNA ribonuclease activity by itself due to partial autoinhibition by its C-terminus, which folds into a short alpha-helix that partially occludes the substrate-binding site. In absence of stress, the ribonuclease activity is inhibited by RNH1 in the cytoplasm. In response to stress, dissociates from RNH1 in the cytoplasm and associates with cytoplasmic ribosomes with vacant A-sites: ribosomes directly activate the tRNA ribonuclease activity of ANG by refolding the C-terminal alpha-helix. In response to stress, the angiogenic activity of ANG is inhibited by RNH1 in the nucleus. Its function is as follows. Secreted ribonuclease that can either promote or restrict cell proliferation of target cells, depending on the context. Endocytosed in target cells via its receptor PLXNB2 and translocates to the cytoplasm or nucleus. Under stress conditions, localizes to the cytoplasm and promotes the assembly of stress granules (SGs): specifically cleaves a subset of tRNAs within anticodon loops to produce tRNA-derived stress-induced fragments (tiRNAs), resulting in translation repression and inhibition of cell proliferation. tiRNas also prevent formation of apoptosome, thereby promoting cell survival. Preferentially cleaves RNAs between a pyrimidine and an adenosine residue, suggesting that it cleaves the anticodon loop of tRNA(Ala) (32-UUAGCAU-38) after positions 33 and 36. Cleaves a subset of tRNAs, including tRNA(Ala), tRNA(Glu), tRNA(Gly), tRNA(Lys), tRNA(Val), tRNA(His), tRNA(Asp) and tRNA(Sec). Under growth conditions and in differentiated cells, translocates to the nucleus and stimulates ribosomal RNA (rRNA) transcription, including that containing the initiation site sequences of 45S rRNA, thereby promoting cell growth and proliferation. Angiogenin induces vascularization of normal and malignant tissues via its ability to promote rRNA transcription. Involved in hematopoietic stem and progenitor cell (HSPC) growth and survival by promoting rRNA transcription in growth conditions and inhibiting translation in response to stress, respectively. Mediates the crosstalk between myeloid and intestinal epithelial cells to protect the intestinal epithelial barrier integrity: secreted by myeloid cells and promotes intestinal epithelial cells proliferation and survival. Also mediates osteoclast-endothelial cell crosstalk in growing bone: produced by osteoclasts and protects the neighboring vascular cells against senescence by promoting rRNA transcription. This is Angiogenin (ANG) from Chlorocebus aethiops (Green monkey).